The sequence spans 215 residues: Holliday junction branch migration complex subunit RuvA (215 aa).

Positions 1 to 67 are domain I; the sequence is MIGWLQGERI…DDGSTLFGFC (67 aa). Positions 68–146 are domain II; sequence DQQERDLFRT…NWAPLQEPSL (79 aa). A flexible linker region spans residues 147-158; sequence SLVDRSDVKAIP. Residues 159-215 form a domain III region; the sequence is LGEPCLRDLQITLETLGYEDLEIRRAMRAVASGPDVPAEDDGDAWLRASLKWLSQSA.

This sequence belongs to the RuvA family. As to quaternary structure, homotetramer. Forms an RuvA(8)-RuvB(12)-Holliday junction (HJ) complex. HJ DNA is sandwiched between 2 RuvA tetramers; dsDNA enters through RuvA and exits via RuvB. An RuvB hexamer assembles on each DNA strand where it exits the tetramer. Each RuvB hexamer is contacted by two RuvA subunits (via domain III) on 2 adjacent RuvB subunits; this complex drives branch migration. In the full resolvosome a probable DNA-RuvA(4)-RuvB(12)-RuvC(2) complex forms which resolves the HJ.

It is found in the cytoplasm. In terms of biological role, the RuvA-RuvB-RuvC complex processes Holliday junction (HJ) DNA during genetic recombination and DNA repair, while the RuvA-RuvB complex plays an important role in the rescue of blocked DNA replication forks via replication fork reversal (RFR). RuvA specifically binds to HJ cruciform DNA, conferring on it an open structure. The RuvB hexamer acts as an ATP-dependent pump, pulling dsDNA into and through the RuvAB complex. HJ branch migration allows RuvC to scan DNA until it finds its consensus sequence, where it cleaves and resolves the cruciform DNA. This Synechococcus sp. (strain WH7803) protein is Holliday junction branch migration complex subunit RuvA.